A 268-amino-acid chain; its full sequence is tRNA pseudouridine synthase A (268 aa).

The active-site Nucleophile is Asp52. Residue Tyr110 coordinates substrate.

This sequence belongs to the tRNA pseudouridine synthase TruA family. In terms of assembly, homodimer.

It carries out the reaction uridine(38/39/40) in tRNA = pseudouridine(38/39/40) in tRNA. Functionally, formation of pseudouridine at positions 38, 39 and 40 in the anticodon stem and loop of transfer RNAs. The chain is tRNA pseudouridine synthase A from Prochlorococcus marinus (strain MIT 9301).